The chain runs to 412 residues: Circumsporozoite protein (412 aa).

Positions 1–18 (MMRKLAILSVSSFLFVEA) are cleaved as a signal peptide. The disordered stretch occupies residues 69–328 (SRSLGENDDG…KNNNNEEPSD (260 aa)). The segment covering 85–105 (NGREGKDEDKRDGNNEDNEKL) has biased composition (basic and acidic residues). Positions 104-111 (KLRKPKHK) are required for the binding to heparan sulfate proteoglycans (HSPGs) on the surface of host hepatocytes. Positions 112-116 (KLKQP) are region I; contains the proteolytic cleavage site. The segment covering 120 to 288 (NPDPNANPNV…PNANPNANPN (169 aa)) has biased composition (low complexity). 41 tandem repeats follow at residues 123–126 (PNAN), 127–130 (PNVD), 131–134 (PNAN), 135–138 (PNVD), 139–142 (PNAN), 143–146 (PNVD), 147–150 (PNAN), 151–154 (PNAN), 155–158 (PNAN), 159–162 (PNAN), 163–166 (PNAN), 167–170 (PNAN), 171–174 (PNAN), 175–178 (PNAN), 179–182 (PNAN), 183–186 (PNAN), 187–190 (PNAN), 191–194 (PNAN), 195–198 (PNAN), 199–202 (PNAN), 203–206 (PNAN), 207–210 (PNVD), 211–214 (PNAN), 215–218 (PNAN), 219–222 (PNAN), 223–226 (PNAN), 227–230 (PNAN), 231–234 (PNAN), 235–238 (PNAN), 239–242 (PNAN), 243–246 (PNAN), 247–250 (PNAN), 251–254 (PNAN), 255–258 (PNAN), 259–262 (PNAN), 263–266 (PNAN), 267–270 (PNAN), 271–274 (PNAN), 275–278 (PNAN), 279–282 (PNAN), and 283–286 (PNAN). Residues 123 to 286 (PNANPNVDPN…ANPNANPNAN (164 aa)) are 41 X 4 AA tandem repeats of P-N-[AV]-[ND]. Over residues 289–304 (KNNQGNGQGHNMPNDP) the composition is skewed to polar residues. Low complexity predominate over residues 310–324 (ENANANNAVKNNNNE). The 54-residue stretch at 337-390 (KIKNSISTEWSPCSVTCGNGIQVRIKPGSANKPKDELDYENDIEKKICKMEKCS) folds into the TSP type-1 domain. Disulfide bonds link Cys349-Cys384 and Cys353-Cys389. Thr352 carries an O-linked (Fuc) threonine glycan. Cys389 is lipidated: GPI-anchor amidated cysteine. Residues 390-412 (SSVFNVVNSSIGLIMVLSFLFLN) constitute a propeptide, removed in mature form.

It belongs to the plasmodium circumsporozoite protein family. During host cell invasion, proteolytically cleaved at the cell membrane in the region I by a papain-like cysteine protease of parasite origin. Cleavage is triggered by the sporozoite contact with highly sulfated heparan sulfate proteoglycans (HSPGs) present on the host hepatocyte cell surface. Cleavage exposes the TSP type-1 (TSR) domain and is required for productive invasion of host hepatocytes but not for adhesion to the host cell membrane. Cleavage is dispensable for sporozoite development in the oocyst, motility and for traversal of host and vector cells. Post-translationally, O-glycosylated; maybe by POFUT2.

The protein resides in the cell membrane. It localises to the cytoplasm. In terms of biological role, essential sporozoite protein. In the mosquito vector, required for sporozoite development in the oocyst, migration through the vector hemolymph and entry into the vector salivary glands. In the vertebrate host, required for sporozoite migration through the host dermis and infection of host hepatocytes. Binds to highly sulfated heparan sulfate proteoglycans (HSPGs) on the surface of host hepatocytes. Its function is as follows. In the vertebrate host, binds to highly sulfated heparan sulfate proteoglycans (HSPGs) on the surface of host hepatocytes and is required for sporozoite invasion of the host hepatocytes. The sequence is that of Circumsporozoite protein from Plasmodium falciparum.